Reading from the N-terminus, the 379-residue chain is Glutamate 5-kinase (379 aa).

Lys15 contributes to the ATP binding site. 3 residues coordinate substrate: Ser56, Asp143, and Asn155. Ser175–Asp176 is an ATP binding site. The PUA domain maps to Lys281–Ser358.

It belongs to the glutamate 5-kinase family.

It is found in the cytoplasm. It catalyses the reaction L-glutamate + ATP = L-glutamyl 5-phosphate + ADP. It participates in amino-acid biosynthesis; L-proline biosynthesis; L-glutamate 5-semialdehyde from L-glutamate: step 1/2. In terms of biological role, catalyzes the transfer of a phosphate group to glutamate to form L-glutamate 5-phosphate. The chain is Glutamate 5-kinase from Nitrobacter hamburgensis (strain DSM 10229 / NCIMB 13809 / X14).